The following is a 383-amino-acid chain: V-type proton ATPase subunit C 1-A (383 aa).

T2 carries the N-acetylthreonine modification.

The protein belongs to the V-ATPase C subunit family. In terms of assembly, V-ATPase is a heteromultimeric enzyme made up of two complexes: the ATP-hydrolytic V1 complex and the proton translocation V0 complex. The V1 complex consists of three catalytic AB heterodimers that form a heterohexamer, three peripheral stalks each consisting of EG heterodimers, one central rotor including subunits D and F, and the regulatory subunits C and H. The proton translocation complex V0 consists of the proton transport subunit a, a ring of proteolipid subunits c9c'', rotary subunit d, subunits e and f, and two accessory subunits.

Its function is as follows. Subunit of the V1 complex of vacuolar(H+)-ATPase (V-ATPase), a multisubunit enzyme composed of a peripheral complex (V1) that hydrolyzes ATP and a membrane integral complex (V0) that translocates protons. V-ATPase is responsible for acidifying and maintaining the pH of intracellular compartments and in some cell types, is targeted to the plasma membrane, where it is responsible for acidifying the extracellular environment. Subunit C is necessary for the assembly of the catalytic sector of the enzyme and is likely to have a specific function in its catalytic activity. The polypeptide is V-type proton ATPase subunit C 1-A (atp6v1c1a) (Danio rerio (Zebrafish)).